Here is a 236-residue protein sequence, read N- to C-terminus: MPPRELSEAESSPLRSPTPPPGRGSASPELGIKCVLVGDGAVGKSSLIVSYTCNGYPARYRPTALDTFSVQVLVDGAPVRIELWDTAGQEDLDRLRSLCYPDTDVFLACFSVVQPSSFQNITEKWLPEIRTHNPQAPVLLVGTQADLRDDVNVLIQLDQGGREGPVPQPQAQGLAEKIRACCYLECSALTQKNLKEVFDSAILSAIEHKARLEKKLNAKGVRTLSRCRWKKFFCFV.

Positions 1-27 (MPPRELSEAESSPLRSPTPPPGRGSAS) are disordered. Ser-25 is modified (phosphoserine). GTP-binding positions include 38-45 (GDGAVGKS), 85-89 (DTAGQ), and 143-146 (TQAD). Cys-234 carries S-palmitoyl cysteine lipidation.

This sequence belongs to the small GTPase superfamily. Rho family. As to quaternary structure, interacts with PAK2. Mg(2+) is required as a cofactor.

Its subcellular location is the cell membrane. It is found in the endosome membrane. Plays a role in the control of the actin cytoskeleton via activation of the JNK pathway. This chain is Rho-related GTP-binding protein RhoV, found in Bos taurus (Bovine).